We begin with the raw amino-acid sequence, 182 residues long: Large ribosomal subunit protein uL5 (182 aa).

Belongs to the universal ribosomal protein uL5 family. As to quaternary structure, part of the 50S ribosomal subunit; part of the 5S rRNA/L5/L18/L25 subcomplex. Contacts the 5S rRNA and the P site tRNA. Forms a bridge to the 30S subunit in the 70S ribosome.

Functionally, this is one of the proteins that bind and probably mediate the attachment of the 5S RNA into the large ribosomal subunit, where it forms part of the central protuberance. In the 70S ribosome it contacts protein S13 of the 30S subunit (bridge B1b), connecting the 2 subunits; this bridge is implicated in subunit movement. Contacts the P site tRNA; the 5S rRNA and some of its associated proteins might help stabilize positioning of ribosome-bound tRNAs. This Borrelia duttonii (strain Ly) protein is Large ribosomal subunit protein uL5.